Here is a 137-residue protein sequence, read N- to C-terminus: ATP synthase epsilon chain, chloroplastic (137 aa).

It belongs to the ATPase epsilon chain family. F-type ATPases have 2 components, CF(1) - the catalytic core - and CF(0) - the membrane proton channel. CF(1) has five subunits: alpha(3), beta(3), gamma(1), delta(1), epsilon(1). CF(0) has three main subunits: a, b and c.

The protein resides in the plastid. The protein localises to the chloroplast thylakoid membrane. Produces ATP from ADP in the presence of a proton gradient across the membrane. The chain is ATP synthase epsilon chain, chloroplastic from Medicago sativa (Alfalfa).